The sequence spans 149 residues: Nucleoside diphosphate kinase (149 aa).

ATP is bound by residues K9, F57, R85, T91, R102, and N112. The Pros-phosphohistidine intermediate role is filled by H115.

Belongs to the NDK family. Homotetramer. Mg(2+) is required as a cofactor.

It localises to the cytoplasm. The enzyme catalyses a 2'-deoxyribonucleoside 5'-diphosphate + ATP = a 2'-deoxyribonucleoside 5'-triphosphate + ADP. The catalysed reaction is a ribonucleoside 5'-diphosphate + ATP = a ribonucleoside 5'-triphosphate + ADP. In terms of biological role, major role in the synthesis of nucleoside triphosphates other than ATP. The ATP gamma phosphate is transferred to the NDP beta phosphate via a ping-pong mechanism, using a phosphorylated active-site intermediate. This chain is Nucleoside diphosphate kinase, found in Roseiflexus sp. (strain RS-1).